Consider the following 351-residue polypeptide: UDP-N-acetylenolpyruvoylglucosamine reductase (351 aa).

The 172-residue stretch at 25 to 196 (HIQAQARWLL…TAVEFRLPLL (172 aa)) folds into the FAD-binding PCMH-type domain. Residue arginine 173 is part of the active site. Serine 246 (proton donor) is an active-site residue. Residue glutamate 343 is part of the active site.

Belongs to the MurB family. It depends on FAD as a cofactor.

Its subcellular location is the cytoplasm. The enzyme catalyses UDP-N-acetyl-alpha-D-muramate + NADP(+) = UDP-N-acetyl-3-O-(1-carboxyvinyl)-alpha-D-glucosamine + NADPH + H(+). It participates in cell wall biogenesis; peptidoglycan biosynthesis. In terms of biological role, cell wall formation. The protein is UDP-N-acetylenolpyruvoylglucosamine reductase of Xylella fastidiosa (strain M23).